A 214-amino-acid polypeptide reads, in one-letter code: Dephospho-CoA kinase (214 aa).

Positions 3–202 (KIGLTGGIGS…DRWLALAGAA (200 aa)) constitute a DPCK domain. An ATP-binding site is contributed by 11-16 (GSGKSR).

It belongs to the CoaE family.

The protein localises to the cytoplasm. The enzyme catalyses 3'-dephospho-CoA + ATP = ADP + CoA + H(+). Its pathway is cofactor biosynthesis; coenzyme A biosynthesis; CoA from (R)-pantothenate: step 5/5. Functionally, catalyzes the phosphorylation of the 3'-hydroxyl group of dephosphocoenzyme A to form coenzyme A. This is Dephospho-CoA kinase from Bordetella bronchiseptica (strain ATCC BAA-588 / NCTC 13252 / RB50) (Alcaligenes bronchisepticus).